Consider the following 1417-residue polypeptide: DExH-box ATP-dependent RNA helicase DExH4, chloroplastic (1417 aa).

Residues 1-12 (MAPTKKPQKNKQ) show a composition bias toward basic residues. A disordered region spans residues 1 to 37 (MAPTKKPQKNKQSKNEIASSLIPNSGHKKPSKAPKLL). The transit peptide at 1 to 61 (MAPTKKPQKN…NFRRTPSPVT (61 aa)) directs the protein to the chloroplast. A Helicase ATP-binding domain is found at 607–781 (LQKLKEKDVL…FGQCPIITAQ (175 aa)). 620–627 (GETGSGKT) provides a ligand contact to ATP. Positions 722–725 (DEVH) match the DEIH box motif. The Helicase C-terminal domain maps to 868–1043 (LLEELICHID…ELCLHIKLLG (176 aa)).

It belongs to the DExH box helicase family.

It is found in the plastid. Its subcellular location is the chloroplast. The catalysed reaction is ATP + H2O = ADP + phosphate + H(+). This Arabidopsis thaliana (Mouse-ear cress) protein is DExH-box ATP-dependent RNA helicase DExH4, chloroplastic.